The sequence spans 665 residues: Filensin (665 aa).

A head region spans residues 1–40 (MYRRSYVFQTRKEQYEHADEASRAAEPERPADEGWAGATS). Ser-5 bears the Phosphoserine mark. Residues 40-320 (SLAALQGLGE…RIIEIEGNRL (281 aa)) form the IF rod domain. The segment at 41–75 (LAALQGLGERVAAHVQRARALEQRHAGLRRQLDAF) is coil 1A. Ala-42 is subject to N-acetylalanine. The interval 76 to 84 (QRLGELAGP) is linker 1. The tract at residues 85-184 (EDALARQVES…RHKKNLLEVQ (100 aa)) is coil 1B. Residues 185 to 201 (TYISILQQIIHTTPPAS) form a linker 12 region. The tract at residues 202–320 (IVTSGMREEK…RIIEIEGNRL (119 aa)) is coil 2. The tract at residues 321–665 (TSAFIETPIP…DKKKSGEKSS (345 aa)) is tail. Phosphoserine is present on residues Ser-341 and Ser-420. Disordered stretches follow at residues 410-439 (SKFE…QISK) and 506-614 (YDGQ…KGPP). A lipid anchor (N-myristoyl glycine) is attached at Gly-434. The residue at position 513 (Ser-513) is a Phosphoserine. A compositionally biased stretch (basic and acidic residues) spans 556–571 (PEEKREGEERDEESRR). At Ser-665 the chain carries Phosphoserine.

The protein belongs to the intermediate filament family. In terms of assembly, part of a complex required for lens intermediate filament formation composed of BFSP1, BFSP2 and CRYAA. Identified in a complex that contains VIM, EZR, AHNAK, BFSP1, BFSP2, ANK2, PLEC, PRX and spectrin. Found in a complex composed of PPL (via C-terminal linker domain), BFSP1 and BFSP2 in the retinal lens. Within the complex interacts with BFSP2. Interacts (via C-terminus) with MIP (via C-terminus) in aged lens fiber cells. Proteolytically cleaved during lens cell fiber differentiation with increased fragmentation as fiber cell age increases. Post-translationally, myristoylated at Gly-434 following proteolytic cleavage at Asp-433. In terms of processing, acetylated at Ala-42 following proteolytic cleavage at Leu-41. In terms of tissue distribution, expressed in the cortex and nucleus of the retina lens (at protein level).

It is found in the cell membrane. The protein resides in the cytoplasm. It localises to the cytoskeleton. Its subcellular location is the cell cortex. In terms of biological role, required for the correct formation of lens intermediate filaments as part of a complex composed of BFSP1, BFSP2 and CRYAA. Involved in altering the calcium regulation of MIP water permeability. The chain is Filensin (BFSP1) from Homo sapiens (Human).